Here is a 145-residue protein sequence, read N- to C-terminus: Protoporphyrinogen IX oxidase (145 aa).

4 helical membrane-spanning segments follow: residues 6–26 (LWFK…LLYL), 61–81 (AMIS…FVAL), 83–103 (TWFQ…GLLA), and 123–143 (IVNE…IVKP). Residue His12 participates in heme binding. Lys88 contacts heme.

The protein belongs to the HemJ family. In terms of assembly, homodimer. Heme b serves as cofactor.

The protein resides in the cell membrane. The catalysed reaction is protoporphyrinogen IX + 3 A = protoporphyrin IX + 3 AH2. It functions in the pathway porphyrin-containing compound metabolism; protoporphyrin-IX biosynthesis; protoporphyrin-IX from protoporphyrinogen-IX: step 1/1. Catalyzes the oxidation of protoporphyrinogen IX to protoporphyrin IX. Is involved in the biosynthesis of tetrapyrrole molecules like heme. Does not use oxygen or artificial electron acceptors such as menadione or benzoquinone. This Rickettsia prowazekii (strain Madrid E) protein is Protoporphyrinogen IX oxidase.